The sequence spans 178 residues: Large ribosomal subunit protein uL6 (178 aa).

It belongs to the universal ribosomal protein uL6 family. In terms of assembly, part of the 50S ribosomal subunit.

This protein binds to the 23S rRNA, and is important in its secondary structure. It is located near the subunit interface in the base of the L7/L12 stalk, and near the tRNA binding site of the peptidyltransferase center. The polypeptide is Large ribosomal subunit protein uL6 (Campylobacter hominis (strain ATCC BAA-381 / DSM 21671 / CCUG 45161 / LMG 19568 / NCTC 13146 / CH001A)).